Here is a 424-residue protein sequence, read N- to C-terminus: Probable ribonuclease FAU-1 (424 aa).

This sequence belongs to the FAU-1 family.

In terms of biological role, probable RNase involved in rRNA stability through maturation and/or degradation of precursor rRNAs. Binds to RNA in loop regions with AU-rich sequences. The chain is Probable ribonuclease FAU-1 from Saccharolobus islandicus (strain L.S.2.15 / Lassen #1) (Sulfolobus islandicus).